The chain runs to 106 residues: Large ribosomal subunit protein bL21c (106 aa).

The protein belongs to the bacterial ribosomal protein bL21 family. In terms of assembly, part of the 50S ribosomal subunit.

Its subcellular location is the plastid. The protein localises to the chloroplast. In terms of biological role, this protein binds to 23S rRNA. This chain is Large ribosomal subunit protein bL21c, found in Gracilaria tenuistipitata var. liui (Red alga).